A 491-amino-acid polypeptide reads, in one-letter code: NADH-quinone oxidoreductase subunit N 1 (491 aa).

14 helical membrane passes run 15–35, 41–61, 77–97, 105–125, 130–150, 165–185, 211–231, 247–269, 279–299, 307–327, 333–353, 378–398, 416–436, and 459–479; these read VLGMPAFLMIWAMLVLIVDMF, VLLTLSLIGLGVTAALGALDY, FGVLVNWILLAGTALTLLIAF, LSQGEFYPLVLFATSGMLFLV, LVTIFIGVETLSIALYVLTGF, LLLGGFAAGFLVYGIALIYGM, PILLAGVGFVLIALGFKVSMF, PVTAYMSVATKGAAFAAMLRFLN, WQLLFGLFAAATMAYGNIVAV, MLAYSSIAHAGYMLLGVLAAS, AFTVYLLAYTLTNLGAFAVLI, LALAMTVFMFSLAGVPPTAGF, LAIIGVVTSVISAFFYLRVIV, and LGVIVAVIGIIAVGILPNIFT.

It belongs to the complex I subunit 2 family. In terms of assembly, NDH-1 is composed of 14 different subunits. Subunits NuoA, H, J, K, L, M, N constitute the membrane sector of the complex.

Its subcellular location is the cell membrane. The catalysed reaction is a quinone + NADH + 5 H(+)(in) = a quinol + NAD(+) + 4 H(+)(out). NDH-1 shuttles electrons from NADH, via FMN and iron-sulfur (Fe-S) centers, to quinones in the respiratory chain. The immediate electron acceptor for the enzyme in this species is believed to be ubiquinone. Couples the redox reaction to proton translocation (for every two electrons transferred, four hydrogen ions are translocated across the cytoplasmic membrane), and thus conserves the redox energy in a proton gradient. The chain is NADH-quinone oxidoreductase subunit N 1 from Herpetosiphon aurantiacus (strain ATCC 23779 / DSM 785 / 114-95).